A 1157-amino-acid chain; its full sequence is Probable inactive leucine-rich repeat receptor kinase XIAO (1157 aa).

Positions 1–21 are cleaved as a signal peptide; it reads MPPPPRLLFLLVMLLVVAAPG. Asparagine 58 carries an N-linked (GlcNAc...) asparagine glycan. 26 LRR repeats span residues 101 to 125, 127 to 149, 150 to 172, 173 to 196, 198 to 220, 221 to 245, 247 to 269, 270 to 293, 296 to 319, 320 to 343, 344 to 367, 368 to 391, 393 to 414, 415 to 439, 440 to 463, 464 to 487, 489 to 511, 513 to 536, 537 to 559, 561 to 583, 584 to 608, 609 to 631, 632 to 656, 658 to 680, 681 to 704, and 706 to 728; these read LVYLEKLSLRSNSLSGTIPASLSRI, SLRAVYLQYNSLSGPIPQSFLAN, LTNLQTFDVSGNLLSGPVPVSFP, PSLKYLDLSSNAFSGTIPANVSAS, TSLQFLNLSFNRLRGTVPASLGT, LQDLHYLWLDGNLLEGTIPSALSNC, ALLHLSLQGNALRGILPPAVAAI, PSLQILSVSRNRLTGAIPAAAFGG, NSSLRIVQVGGNAFSQVDVPVSLG, KDLQVVDLRANKLAGPFPSWLAGA, GGLTVLDLSGNAFTGEVPPAVGQL, TALQELRLGGNAFTGTVPAEIGRC, ALQVLDLEDNRFSGEVPAALGG, LRRLREVYLGGNSFSGQIPASLGNL, SWLEALSTPGNRLTGDLPSELFVL, GNLTFLDLSDNKLAGEIPPSIGNL, ALQSLNLSGNSFSGRIPSNIGNL, NLRVLDLSGQKNLSGNLPAELFGL, PQLQYVSLAGNSFSGDVPEGFSS, WSLRHLNLSVNSFTGSMPATYGY, LPSLQVLSASHNRICGELPVELANC, SNLTVLDLRSNQLTGPIPGDFAR, LGELEELDLSHNQLSRKIPPEISNC, SLVTLKLDDNHLGGEIPASLSNL, SKLQTLDLSSNNLTGSIPASLAQI, and GMLSLNVSQNELSGEIPAMLGSR. N-linked (GlcNAc...) asparagine glycosylation occurs at asparagine 149. N-linked (GlcNAc...) asparagine glycosylation is found at asparagine 192, asparagine 204, and asparagine 244. N-linked (GlcNAc...) asparagine glycosylation is present at asparagine 296. An N-linked (GlcNAc...) asparagine glycan is attached at asparagine 438. N-linked (GlcNAc...) asparagine glycans are attached at residues asparagine 465, asparagine 494, and asparagine 524. N-linked (GlcNAc...) asparagine glycans are attached at residues asparagine 567, asparagine 607, asparagine 610, asparagine 655, asparagine 679, asparagine 692, and asparagine 711. The chain crosses the membrane as a helical span at residues 765-785; that stretch reads LALLIGVVAATVLLLVLFCCC. Residues 804-825 are disordered; sequence VKKRRRSPGRGSGSSGTSTDSV. A Protein kinase domain is found at 849-1144; the sequence is FDEENVLSRG…LEGCRVGPDI (296 aa). Residues 855–863, 930–932, 936–939, 980–985, and aspartate 998 contribute to the ATP site; these read LSRGRHGLV, DYM, NLAT, and DVKPQN.

The protein belongs to the protein kinase superfamily. Ser/Thr protein kinase family. As to expression, expressed in developing culm, coleoptile, primary root, young spikelet, young leaf blade and leaf sheath, floral meristem primordia, stamen primordia, and lemma and palea primordia.

The protein resides in the cell membrane. Functions in the early stages of organ development by regulating cell division rate. Is probably involved in the regulation of a number of cell-cycle genes. May act as regulator of brassinosteroid (BR) signaling and cell-cycle controlling organ growth. The chain is Probable inactive leucine-rich repeat receptor kinase XIAO from Oryza sativa subsp. japonica (Rice).